A 262-amino-acid polypeptide reads, in one-letter code: Phosphonates import ATP-binding protein PhnC (262 aa).

One can recognise an ABC transporter domain in the interval 5–253; it reads IRVEKLAKTF…RFDHLYRSIN (249 aa). An ATP-binding site is contributed by 37-44; that stretch reads GPSGSGKS.

Belongs to the ABC transporter superfamily. Phosphonates importer (TC 3.A.1.9.1) family. As to quaternary structure, the complex is composed of two ATP-binding proteins (PhnC), two transmembrane proteins (PhnE) and a solute-binding protein (PhnD).

The protein localises to the cell inner membrane. It catalyses the reaction phosphonate(out) + ATP + H2O = phosphonate(in) + ADP + phosphate + H(+). Part of the ABC transporter complex PhnCDE involved in phosphonates, phosphate esters, phosphite and phosphate import. Responsible for energy coupling to the transport system. The polypeptide is Phosphonates import ATP-binding protein PhnC (Escherichia coli (strain K12)).